The following is a 316-amino-acid chain: Probable cell division protein WhiA (316 aa).

The segment at residues 276-309 is a DNA-binding region (H-T-H motif); it reads SLEELGKIAEPQITKDAIAGRIRRLLQLAEKTEK.

Belongs to the WhiA family.

Involved in cell division and chromosome segregation. The chain is Probable cell division protein WhiA from Bifidobacterium longum (strain NCC 2705).